A 95-amino-acid polypeptide reads, in one-letter code: Co-chaperonin GroES (95 aa).

Belongs to the GroES chaperonin family. Heptamer of 7 subunits arranged in a ring. Interacts with the chaperonin GroEL.

It is found in the cytoplasm. In terms of biological role, together with the chaperonin GroEL, plays an essential role in assisting protein folding. The GroEL-GroES system forms a nano-cage that allows encapsulation of the non-native substrate proteins and provides a physical environment optimized to promote and accelerate protein folding. GroES binds to the apical surface of the GroEL ring, thereby capping the opening of the GroEL channel. The sequence is that of Co-chaperonin GroES from Lachnoclostridium phytofermentans (strain ATCC 700394 / DSM 18823 / ISDg) (Clostridium phytofermentans).